Reading from the N-terminus, the 943-residue chain is Isoleucine--tRNA ligase (943 aa).

The short motif at 58–68 (PYANGSIHIGH) is the 'HIGH' region element. E567 contributes to the L-isoleucyl-5'-AMP binding site. The 'KMSKS' region motif lies at 608–612 (KMSKS). ATP is bound at residue K611. Zn(2+)-binding residues include C906, C909, C926, and C929.

It belongs to the class-I aminoacyl-tRNA synthetase family. IleS type 1 subfamily. As to quaternary structure, monomer. Zn(2+) is required as a cofactor.

The protein localises to the cytoplasm. The catalysed reaction is tRNA(Ile) + L-isoleucine + ATP = L-isoleucyl-tRNA(Ile) + AMP + diphosphate. In terms of biological role, catalyzes the attachment of isoleucine to tRNA(Ile). As IleRS can inadvertently accommodate and process structurally similar amino acids such as valine, to avoid such errors it has two additional distinct tRNA(Ile)-dependent editing activities. One activity is designated as 'pretransfer' editing and involves the hydrolysis of activated Val-AMP. The other activity is designated 'posttransfer' editing and involves deacylation of mischarged Val-tRNA(Ile). This Pseudomonas fluorescens (strain ATCC BAA-477 / NRRL B-23932 / Pf-5) protein is Isoleucine--tRNA ligase.